Consider the following 394-residue polypeptide: Chorismate synthase (394 aa).

NADP(+) is bound by residues Arg-42 and Arg-48. FMN contacts are provided by residues 137–139, 258–259, Gly-302, 317–321, and Arg-343; these read RAS, QA, and KPIAT.

This sequence belongs to the chorismate synthase family. Homotetramer. FMNH2 is required as a cofactor.

The catalysed reaction is 5-O-(1-carboxyvinyl)-3-phosphoshikimate = chorismate + phosphate. It functions in the pathway metabolic intermediate biosynthesis; chorismate biosynthesis; chorismate from D-erythrose 4-phosphate and phosphoenolpyruvate: step 7/7. Catalyzes the anti-1,4-elimination of the C-3 phosphate and the C-6 proR hydrogen from 5-enolpyruvylshikimate-3-phosphate (EPSP) to yield chorismate, which is the branch point compound that serves as the starting substrate for the three terminal pathways of aromatic amino acid biosynthesis. This reaction introduces a second double bond into the aromatic ring system. In Streptomyces coelicolor (strain ATCC BAA-471 / A3(2) / M145), this protein is Chorismate synthase.